The chain runs to 329 residues: Arylacetonitrilase (329 aa).

Residues 6 to 279 (VRVAVTQAEP…EGIVYANLDM (274 aa)) form the CN hydrolase domain. The active-site Proton acceptor is the E46. Residue K126 is part of the active site. The Nucleophile role is filled by C161.

This sequence belongs to the carbon-nitrogen hydrolase superfamily. Nitrilase family.

It catalyses the reaction a nitrile + 2 H2O = a carboxylate + NH4(+). The catalysed reaction is 4-chlorophenylacetonitrile + 2 H2O = 4-chlorophenylacetate + NH4(+). In terms of biological role, nitrilase that hydrolyzes preferentially phenylacetonitrile and heteroaromatic nitriles, but has significantly lower activity for (R,S)-mandelonitrile. Also acts on dinitriles like phenylenediacetonitriles (PDAs) 1,2-PDA, 1,3-PDA, and 1,4-PDA, and cyanophenyl acetonitriles (CPAs) 2-CPA and 4-CPA. The sequence is that of Arylacetonitrilase from Hypocrea virens (strain Gv29-8 / FGSC 10586) (Gliocladium virens).